The chain runs to 840 residues: Translation initiation factor IF-2 (840 aa).

Residues 1 to 251 are disordered; that stretch reads MTEEKKFSSS…GPAVPATERK (251 aa). 2 stretches are compositionally biased toward polar residues: residues 38–50 and 65–83; these read DGTN…TPRS and NRHT…ASRP. Positions 84–102 are enriched in low complexity; that stretch reads NQSKSQGQGGRNNQRPGSR. 2 stretches are compositionally biased toward basic and acidic residues: residues 110–135 and 158–168; these read PMIR…KTDN and KPAEQSKKAAE. Residues 169 to 207 show a composition bias toward low complexity; sequence KPAQTKPKTAETKTTATTTQSGTGKFGGALASGNNSARN. The span at 230–239 shows a compositional bias: basic residues; it reads GSKKSRRIAA. Positions 341–510 constitute a tr-type G domain; that stretch reads ARPPVVTIMG…LLQAEVLELK (170 aa). Residues 350 to 357 form a G1 region; it reads GHVDHGKT. 350-357 is a binding site for GTP; the sequence is GHVDHGKT. Residues 375–379 form a G2 region; it reads GITQH. Positions 396 to 399 are G3; that stretch reads DTPG. Residues 396-400 and 450-453 each bind GTP; these read DTPGH and NKID. The interval 450 to 453 is G4; it reads NKID. The G5 stretch occupies residues 486–488; that stretch reads SAK.

Belongs to the TRAFAC class translation factor GTPase superfamily. Classic translation factor GTPase family. IF-2 subfamily.

Its subcellular location is the cytoplasm. Functionally, one of the essential components for the initiation of protein synthesis. Protects formylmethionyl-tRNA from spontaneous hydrolysis and promotes its binding to the 30S ribosomal subunits. Also involved in the hydrolysis of GTP during the formation of the 70S ribosomal complex. In Leuconostoc citreum (strain KM20), this protein is Translation initiation factor IF-2.